Here is a 372-residue protein sequence, read N- to C-terminus: Chaperone protein DnaJ (372 aa).

Positions 5–70 (DYYDVLGVER…QKRANYDQYG (66 aa)) constitute a J domain. Residues 130 to 208 (GTTKDIQINT…CHGDGRVHKK (79 aa)) form a CR-type zinc finger. Residues Cys143, Cys146, Cys160, Cys163, Cys182, Cys185, Cys196, and Cys199 each coordinate Zn(2+). CXXCXGXG motif repeat units follow at residues 143–150 (CDSCDGSG), 160–167 (CSTCHGAG), 182–189 (CPSCHGSG), and 196–203 (CKSCHGDG).

This sequence belongs to the DnaJ family. In terms of assembly, homodimer. Zn(2+) is required as a cofactor.

It localises to the cytoplasm. Its function is as follows. Participates actively in the response to hyperosmotic and heat shock by preventing the aggregation of stress-denatured proteins and by disaggregating proteins, also in an autonomous, DnaK-independent fashion. Unfolded proteins bind initially to DnaJ; upon interaction with the DnaJ-bound protein, DnaK hydrolyzes its bound ATP, resulting in the formation of a stable complex. GrpE releases ADP from DnaK; ATP binding to DnaK triggers the release of the substrate protein, thus completing the reaction cycle. Several rounds of ATP-dependent interactions between DnaJ, DnaK and GrpE are required for fully efficient folding. Also involved, together with DnaK and GrpE, in the DNA replication of plasmids through activation of initiation proteins. This chain is Chaperone protein DnaJ, found in Pasteurella multocida (strain Pm70).